The chain runs to 379 residues: MQIIKTPLGIITRRGLQLSLLSLLLTMLSLTWAMPGWSLPLNQPMLLGALAQGNAITDPNAILRYALPIDNPEVRRLQDSLEDISNHIRAKRWPAIKKDVRAANLTITLKEDKILAGVPADRQPEAETLLGSIKTDLTALTEAVEAKDKEQVISFRKSALTAIGDLEALMVTDFPFAIPEEFANLPQLKGRATVEMTTNKGPLTIVVDGYSAPINAGNFVDLVQRKFYDGLPFIRSEDFFVTQAGDPPGPEAGFIDPQTKEYRAIPLEILVKGEEGPIYGMTLEDAGMYLPELALPFNAYGAIALARPETEPNGGSSQFFFFKFDTELTPPGFNLMDGRYSVFGYVVDGKETLEQLSEGDKIVSAKVISGADNLVNGNS.

The N-terminal stretch at 1–33 (MQIIKTPLGIITRRGLQLSLLSLLLTMLSLTWA) is a signal peptide. The region spanning 190 to 378 (GRATVEMTTN…SGADNLVNGN (189 aa)) is the PPIase cyclophilin-type domain.

Its subcellular location is the cellular thylakoid lumen. The enzyme catalyses [protein]-peptidylproline (omega=180) = [protein]-peptidylproline (omega=0). In terms of biological role, PPIases accelerate the folding of proteins. It catalyzes the cis-trans isomerization of proline imidic peptide bonds in oligopeptides. Required for the assembly and stabilization of PSII. This is Putative thylakoid lumen peptidyl-prolyl cis-trans isomerase sll0408 from Synechocystis sp. (strain ATCC 27184 / PCC 6803 / Kazusa).